A 265-amino-acid chain; its full sequence is Metallo-beta-lactamase VIM-7 (265 aa).

A signal peptide spans 1-17; the sequence is MFQIRSFLVGISAFVMA. 6 residues coordinate Zn(2+): His113, His115, Asp117, His178, Cys197, and His239.

The protein belongs to the metallo-beta-lactamase superfamily. Class-B beta-lactamase family. In terms of assembly, monomer. It depends on Zn(2+) as a cofactor.

It is found in the periplasm. The catalysed reaction is a beta-lactam + H2O = a substituted beta-amino acid. Its function is as follows. Class B beta-lactamase which confers resistance to the beta-lactam antibiotics, including penicillins, cephalosporins and carbapenems. Acts via hydrolysis of the beta-lactam ring. Has penicillin-, cephalosporin- and carbapenem-hydrolyzing activities. This chain is Metallo-beta-lactamase VIM-7, found in Pseudomonas aeruginosa.